Consider the following 81-residue polypeptide: Putative defensin-like protein 56 (81 aa).

Positions Met-1 to Ser-23 are cleaved as a signal peptide. 4 cysteine pairs are disulfide-bonded: Cys-46/Cys-80, Cys-50/Cys-73, Cys-59/Cys-78, and Cys-63/Cys-79.

The protein belongs to the DEFL family.

The protein localises to the secreted. The polypeptide is Putative defensin-like protein 56 (Arabidopsis thaliana (Mouse-ear cress)).